The following is a 65-amino-acid chain: Large ribosomal subunit protein bL33m (65 aa).

This sequence belongs to the bacterial ribosomal protein bL33 family. As to quaternary structure, component of the mitochondrial ribosome large subunit (39S) which comprises a 16S rRNA and about 50 distinct proteins.

It is found in the mitochondrion. This Anopheles gambiae (African malaria mosquito) protein is Large ribosomal subunit protein bL33m (mRpL33).